Here is a 309-residue protein sequence, read N- to C-terminus: tRNA dimethylallyltransferase (309 aa).

ATP is bound at residue 11–18; it reads GPTATGKS. 13 to 18 lines the substrate pocket; the sequence is TATGKS.

This sequence belongs to the IPP transferase family. As to quaternary structure, monomer. Mg(2+) serves as cofactor.

It catalyses the reaction adenosine(37) in tRNA + dimethylallyl diphosphate = N(6)-dimethylallyladenosine(37) in tRNA + diphosphate. Functionally, catalyzes the transfer of a dimethylallyl group onto the adenine at position 37 in tRNAs that read codons beginning with uridine, leading to the formation of N6-(dimethylallyl)adenosine (i(6)A). This Rhodococcus jostii (strain RHA1) protein is tRNA dimethylallyltransferase.